The sequence spans 1298 residues: DNA-directed RNA polymerase subunit beta' (1298 aa).

The Zn(2+) site is built by Cys60, Cys62, Cys75, and Cys78. Asp535, Asp537, and Asp539 together coordinate Mg(2+). Zn(2+) contacts are provided by Cys877, Cys954, Cys961, and Cys964.

It belongs to the RNA polymerase beta' chain family. In terms of assembly, the RNAP catalytic core consists of 2 alpha, 1 beta, 1 beta' and 1 omega subunit. When a sigma factor is associated with the core the holoenzyme is formed, which can initiate transcription. Mg(2+) serves as cofactor. Requires Zn(2+) as cofactor.

The catalysed reaction is RNA(n) + a ribonucleoside 5'-triphosphate = RNA(n+1) + diphosphate. DNA-dependent RNA polymerase catalyzes the transcription of DNA into RNA using the four ribonucleoside triphosphates as substrates. This is DNA-directed RNA polymerase subunit beta' from Micrococcus luteus (strain ATCC 4698 / DSM 20030 / JCM 1464 / CCM 169 / CCUG 5858 / IAM 1056 / NBRC 3333 / NCIMB 9278 / NCTC 2665 / VKM Ac-2230) (Micrococcus lysodeikticus).